Here is a 157-residue protein sequence, read N- to C-terminus: MSLLIDIVDETNSVSADALQEVEKLLQFAAEKEGVQDQAEVSVTIVTNEEIREINRDYRGKDTPTDVISFALEEEGEDEVEIVGADMPPVLGDIIISADRTKEQAEEYGHSFMRELGFLAVHGFLHLLGYDHMTKEEEEEMFSKQKDLLDEYGLTRS.

3 residues coordinate Zn(2+): His122, His126, and His132.

This sequence belongs to the endoribonuclease YbeY family. Zn(2+) is required as a cofactor.

It is found in the cytoplasm. Single strand-specific metallo-endoribonuclease involved in late-stage 70S ribosome quality control and in maturation of the 3' terminus of the 16S rRNA. This Bacillus velezensis (strain DSM 23117 / BGSC 10A6 / LMG 26770 / FZB42) (Bacillus amyloliquefaciens subsp. plantarum) protein is Endoribonuclease YbeY.